The following is a 370-amino-acid chain: Probable trehalose-phosphate phosphatase 6 (370 aa).

The protein belongs to the trehalose phosphatase family. The cofactor is a divalent metal cation.

The catalysed reaction is alpha,alpha-trehalose 6-phosphate + H2O = alpha,alpha-trehalose + phosphate. It participates in glycan biosynthesis; trehalose biosynthesis. In terms of biological role, removes the phosphate from trehalose 6-phosphate to produce free trehalose. Trehalose accumulation in plant may improve abiotic stress tolerance. In Oryza sativa subsp. japonica (Rice), this protein is Probable trehalose-phosphate phosphatase 6 (TPP6).